Reading from the N-terminus, the 427-residue chain is Glutamate-1-semialdehyde 2,1-aminomutase (427 aa).

Lys265 bears the N6-(pyridoxal phosphate)lysine mark.

It belongs to the class-III pyridoxal-phosphate-dependent aminotransferase family. HemL subfamily. In terms of assembly, homodimer. Pyridoxal 5'-phosphate is required as a cofactor.

Its subcellular location is the cytoplasm. The enzyme catalyses (S)-4-amino-5-oxopentanoate = 5-aminolevulinate. Its pathway is porphyrin-containing compound metabolism; protoporphyrin-IX biosynthesis; 5-aminolevulinate from L-glutamyl-tRNA(Glu): step 2/2. This is Glutamate-1-semialdehyde 2,1-aminomutase from Burkholderia pseudomallei (strain 1710b).